The chain runs to 314 residues: Methionyl-tRNA formyltransferase (314 aa).

111-114 (SLLP) lines the (6S)-5,6,7,8-tetrahydrofolate pocket.

This sequence belongs to the Fmt family.

The catalysed reaction is L-methionyl-tRNA(fMet) + (6R)-10-formyltetrahydrofolate = N-formyl-L-methionyl-tRNA(fMet) + (6S)-5,6,7,8-tetrahydrofolate + H(+). Attaches a formyl group to the free amino group of methionyl-tRNA(fMet). The formyl group appears to play a dual role in the initiator identity of N-formylmethionyl-tRNA by promoting its recognition by IF2 and preventing the misappropriation of this tRNA by the elongation apparatus. In Chlorobium luteolum (strain DSM 273 / BCRC 81028 / 2530) (Pelodictyon luteolum), this protein is Methionyl-tRNA formyltransferase.